The following is a 658-amino-acid chain: CXXC-type zinc finger protein 1 (658 aa).

M1 bears the N-acetylmethionine mark. A compositionally biased stretch (acidic residues) spans 1-14; that stretch reads MEGDASDPEPPDAG. The disordered stretch occupies residues 1-20; that stretch reads MEGDASDPEPPDAGEDSKSE. A phosphoserine mark is found at S6 and S19. The PHD-type zinc-finger motif lies at 28-76; the sequence is YCICRKPDINCFMIGCDNCNEWFHGDCIRITEKMAKAIREWYCRECREK. The tract at residues 84-164 is disordered; sequence YRHKKSRERD…HQQQQQQQQI (81 aa). The segment covering 90 to 120 has biased composition (basic and acidic residues); it reads RERDSSERDGSEPRDEGGGRKRPAPDPDLQR. Residues 153–163 are compositionally biased toward low complexity; that stretch reads QHHQQQQQQQQ. The segment at 162-211 adopts a CXXC-type zinc-finger fold; sequence QQIKRSARMCGECEACRRTEDCGHCDFCRDMKKFGGPNKIRQKCRLRQCQ. Zn(2+) is bound by residues C171, C174, C177, C183, C186, C189, C205, and C210. 2 disordered regions span residues 221–285 and 327–373; these read FPSS…SDED and VKVK…DPAS. S226 carries the phosphoserine modification. T229 is subject to Phosphothreonine. A Glycyl lysine isopeptide (Lys-Gly) (interchain with G-Cter in SUMO2) cross-link involves residue K252. Over residues 327–336 the composition is skewed to basic residues; the sequence is VKVKHVKRRE. The segment covering 337-347 has biased composition (basic and acidic residues); sequence KKSEKKKDERY. Over residues 348-360 the composition is skewed to basic residues; it reads KRHRQKQKHKDKW. Positions 361 to 370 are enriched in basic and acidic residues; that stretch reads KHPERADAKD. The stretch at 428–470 forms a coiled coil; that stretch reads GKKLLERIRREQQSARTRLQEMERRFHELEAIILRAKQQAVRE.

Component of the SET1 complex, at least composed of the catalytic subunit (SETD1A or SETD1B), WDR5, WDR82, RBBP5, ASH2L/ASH2, CXXC1/CFP1, HCFC1 and DPY30. Interacts with SETD1A. Interacts with ZNF335. Interacts with PRDM9; this interaction does not link PRDM9-activated recombination hotspot sites with DSB machinery and is not required for the hotspot recognition pathway. Interacts with histone H3K4me3. Post-translationally, may be regulated by proteolysis.

It is found in the nucleus speckle. It localises to the nucleus. Transcriptional activator that exhibits a unique DNA binding specificity for CpG unmethylated motifs with a preference for CpGG. The sequence is that of CXXC-type zinc finger protein 1 (CXXC1) from Bos taurus (Bovine).